The following is a 353-amino-acid chain: MSNGGDQQQHGLLGPDGAPGRVVVVTGLSGAGKSTALHALEDLGFFCVDNLPTSLVQPAVEACESGGITRIGLGIDVRVGSFLAGATAALDSIRTGRDVVILFLDASDETLLRRFSETRRPHPLTTGGSGAIAMLDGVLLERERLASLRARATIELDTTRLSTHDLRRVVIERLRPARVEVPRMSTRFVSFGYKYGIPLDADLLFDVRFLDNPYFVHGLRELTGNDEPVREYILKNPDALEFICRTEQLLSFCMPRYASEGKSYLTVGIGCTGGRHRSVVLTNALSDSLRRKTGLPITVVHRDVARVSTSGVPSGVGEGMAGAPGVDLRLAQPGATPSEPRPASDTSVTGGER.

27-34 (GLSGAGKS) provides a ligand contact to ATP. Residue 76–79 (DVRV) participates in GTP binding. The disordered stretch occupies residues 310-353 (SGVPSGVGEGMAGAPGVDLRLAQPGATPSEPRPASDTSVTGGER). A compositionally biased stretch (polar residues) spans 344–353 (SDTSVTGGER).

The protein belongs to the RapZ-like family.

Functionally, displays ATPase and GTPase activities. This chain is Nucleotide-binding protein sce5766, found in Sorangium cellulosum (strain So ce56) (Polyangium cellulosum (strain So ce56)).